A 503-amino-acid chain; its full sequence is MLDLTYETPAPKVISGAKEDWELVIGMEVHAQVTSAAKLFSAASTQFGAEPNNNVSFVDAAMPGMLPTINEYCVEQAVRTGLGLKAEINLHSAFDRKNYFYPDLPQGYQISQLYHPIVGEGEVLVEMGNGTARLVRVERIHLEQDAGKSIHDMDPNMSFVDLNRTGVALMEIVSRPDIRGPEEAAAYLGKLRQILRYLGTCNGDMQSGAMRADVNVSICRPGQYEKYQATQDFSHLGTRCEIKNMNSMRFIQQAIEVEARRQIAIVEAGGTVDQETRLYDPDRNETRSMRSKEEAHDYRYFPDPDLLPLEIEQAWVDDIAANLPELPDAKKARFRNDFGLSDYDASVLTADLDSAGYFEAVAAGRDGKMAANWVINELFGRLKKEDHAITDSPVSPAQLGGIIDLIASDAISGKIAKDVFEICYTTGRDPAEIVETEGMKQVTDTGAIEAAVDEIIAANPDQVAKARENPKLAGWFVGQVMKATGGKANPKVVNQLIAKRLAE.

It belongs to the GatB/GatE family. GatB subfamily. As to quaternary structure, heterotrimer of A, B and C subunits.

It carries out the reaction L-glutamyl-tRNA(Gln) + L-glutamine + ATP + H2O = L-glutaminyl-tRNA(Gln) + L-glutamate + ADP + phosphate + H(+). The catalysed reaction is L-aspartyl-tRNA(Asn) + L-glutamine + ATP + H2O = L-asparaginyl-tRNA(Asn) + L-glutamate + ADP + phosphate + 2 H(+). Allows the formation of correctly charged Asn-tRNA(Asn) or Gln-tRNA(Gln) through the transamidation of misacylated Asp-tRNA(Asn) or Glu-tRNA(Gln) in organisms which lack either or both of asparaginyl-tRNA or glutaminyl-tRNA synthetases. The reaction takes place in the presence of glutamine and ATP through an activated phospho-Asp-tRNA(Asn) or phospho-Glu-tRNA(Gln). The sequence is that of Aspartyl/glutamyl-tRNA(Asn/Gln) amidotransferase subunit B from Roseobacter denitrificans (strain ATCC 33942 / OCh 114) (Erythrobacter sp. (strain OCh 114)).